The chain runs to 170 residues: Dual-action ribosomal maturation protein DarP (170 aa).

The protein belongs to the DarP family.

The protein localises to the cytoplasm. Functionally, member of a network of 50S ribosomal subunit biogenesis factors which assembles along the 30S-50S interface, preventing incorrect 23S rRNA structures from forming. Promotes peptidyl transferase center (PTC) maturation. This is Dual-action ribosomal maturation protein DarP from Neisseria meningitidis serogroup A / serotype 4A (strain DSM 15465 / Z2491).